We begin with the raw amino-acid sequence, 197 residues long: dITP/XTP pyrophosphatase (197 aa).

Residue 8-13 (TGNPGK) participates in substrate binding. The Mg(2+) site is built by glutamate 40 and aspartate 69. Catalysis depends on aspartate 69, which acts as the Proton acceptor. Substrate contacts are provided by residues serine 70, 154-157 (FGYD), lysine 177, and 182-183 (HR).

This sequence belongs to the HAM1 NTPase family. In terms of assembly, homodimer. The cofactor is Mg(2+).

The catalysed reaction is XTP + H2O = XMP + diphosphate + H(+). It carries out the reaction dITP + H2O = dIMP + diphosphate + H(+). The enzyme catalyses ITP + H2O = IMP + diphosphate + H(+). Pyrophosphatase that catalyzes the hydrolysis of nucleoside triphosphates to their monophosphate derivatives, with a high preference for the non-canonical purine nucleotides XTP (xanthosine triphosphate), dITP (deoxyinosine triphosphate) and ITP. Seems to function as a house-cleaning enzyme that removes non-canonical purine nucleotides from the nucleotide pool, thus preventing their incorporation into DNA/RNA and avoiding chromosomal lesions. This chain is dITP/XTP pyrophosphatase, found in Yersinia pestis.